Here is an 84-residue protein sequence, read N- to C-terminus: Polcalcin Ole e 3 (84 aa).

2 EF-hand domains span residues 6–40 and 41–76; these read QEVA…TLGS and VTPE…NRGL. 9 residues coordinate Ca(2+): Asp19, Asn21, Asp23, Lys25, Glu30, Asp54, Asp56, Asp58, and Glu65.

Expressed exclusively in mature pollen.

The protein resides in the endomembrane system. The chain is Polcalcin Ole e 3 (OLE3) from Olea europaea (Common olive).